A 185-amino-acid polypeptide reads, in one-letter code: Guanosine deaminase (185 aa).

One can recognise a CMP/dCMP-type deaminase domain in the interval 28 to 142; the sequence is DSDHKFLTQA…AAIAIGFDDF (115 aa). H80 provides a ligand contact to Zn(2+). E82 acts as the Proton donor in catalysis. The Zn(2+) site is built by C110 and C113.

This sequence belongs to the cytidine and deoxycytidylate deaminase family. In terms of tissue distribution, expressed in roots, leaves, flowers and siliques.

Its subcellular location is the cytoplasm. It localises to the nucleus. It carries out the reaction guanosine + H2O + H(+) = xanthosine + NH4(+). Its function is as follows. Catalyzes the hydrolytic deamination of guanosine, producing xanthosine and ammonia. Deaminates exclusively guanosine and 2'-deoxyguanosine but no other aminated purines, pyrimidines, or pterines. Deamination of guanosine by GSDA is the only source of xanthosine production in Arabidopsis. This Arabidopsis thaliana (Mouse-ear cress) protein is Guanosine deaminase.